The sequence spans 403 residues: MSSYLFTSESVSEGHPDKVADQISDAVLDAILTQDQRARVACETMVKTGVAIVAGEITTSAWIDLEALTRKVIVDIGYDSSDVGFDGATCGVLNLIGKQSPHIAQGVDRKKPEEMGAGDQGLMFGYATNETDSYMPAAIHLSHRLVEQQAKIRKKKNSPLSWLRPDAKSQVTLRYENGVVSAIDAVVLSTQHAPGIKQKDLIEAVREEIIKPVLPAKWLHKGTKFHINPTGKFEIGGPVGDCGLTGRKIIVDTYGGWARHGGGAFSGKDPSKVDRSAAYAARYVAKNVVAAGLADRCEVQVSYAIGVAEPTSISVTTFGTGKISDDKIEKLIRKHFDLRPYGIIKMLDLVHPMYQQTAAYGHFGRKPKEFSYLNGEGETVNATAFSWEKTDRAAALRADAKLK.

His15 provides a ligand contact to ATP. Mg(2+) is bound at residue Asp17. Glu43 is a binding site for K(+). L-methionine is bound by residues Glu56 and Gln99. Residues 99–109 form a flexible loop region; the sequence is QSPHIAQGVDR. ATP is bound by residues 166-168, 232-233, Asp241, 247-248, Ala264, and Lys268; these read DAK, KF, and RK. An L-methionine-binding site is contributed by Asp241. Position 272 (Lys272) interacts with L-methionine.

It belongs to the AdoMet synthase family. In terms of assembly, homotetramer; dimer of dimers. It depends on Mg(2+) as a cofactor. K(+) serves as cofactor.

Its subcellular location is the cytoplasm. It carries out the reaction L-methionine + ATP + H2O = S-adenosyl-L-methionine + phosphate + diphosphate. It functions in the pathway amino-acid biosynthesis; S-adenosyl-L-methionine biosynthesis; S-adenosyl-L-methionine from L-methionine: step 1/1. In terms of biological role, catalyzes the formation of S-adenosylmethionine (AdoMet) from methionine and ATP. The overall synthetic reaction is composed of two sequential steps, AdoMet formation and the subsequent tripolyphosphate hydrolysis which occurs prior to release of AdoMet from the enzyme. This chain is S-adenosylmethionine synthase, found in Stenotrophomonas maltophilia (strain R551-3).